A 183-amino-acid polypeptide reads, in one-letter code: uncharacterized protein (183 aa).

The signal sequence occupies residues 1-29 (MQCWQQPFLRFLQQPFFLATASLAGSSSS). The tract at residues 149 to 183 (PGSTCDGSLKGRAYPSCVPKRDPEHSREESHPLSG) is disordered. The segment covering 167–183 (PKRDPEHSREESHPLSG) has biased composition (basic and acidic residues).

The protein resides in the secreted. This is an uncharacterized protein from Homo sapiens (Human).